A 471-amino-acid polypeptide reads, in one-letter code: tRNA-2-methylthio-N(6)-dimethylallyladenosine synthase (471 aa).

In terms of domain architecture, MTTase N-terminal spans 33-151 (KKYMITTYGC…FPELLSRSME (119 aa)). [4Fe-4S] cluster is bound by residues Cys42, Cys78, Cys112, Cys188, Cys192, and Cys195. In terms of domain architecture, Radical SAM core spans 174–404 (RKYDLKGFIN…LDKVNEISAE (231 aa)). The region spanning 407 to 470 (QSYLNKVVEV…TFSLNGEVIQ (64 aa)) is the TRAM domain.

Belongs to the methylthiotransferase family. MiaB subfamily. Monomer. [4Fe-4S] cluster is required as a cofactor.

Its subcellular location is the cytoplasm. It catalyses the reaction N(6)-dimethylallyladenosine(37) in tRNA + (sulfur carrier)-SH + AH2 + 2 S-adenosyl-L-methionine = 2-methylsulfanyl-N(6)-dimethylallyladenosine(37) in tRNA + (sulfur carrier)-H + 5'-deoxyadenosine + L-methionine + A + S-adenosyl-L-homocysteine + 2 H(+). Its function is as follows. Catalyzes the methylthiolation of N6-(dimethylallyl)adenosine (i(6)A), leading to the formation of 2-methylthio-N6-(dimethylallyl)adenosine (ms(2)i(6)A) at position 37 in tRNAs that read codons beginning with uridine. This chain is tRNA-2-methylthio-N(6)-dimethylallyladenosine synthase, found in Alkaliphilus oremlandii (strain OhILAs) (Clostridium oremlandii (strain OhILAs)).